The primary structure comprises 283 residues: Probable replication-associated protein repA1 (283 aa).

The protein belongs to the IncFII RepA family.

Its function is as follows. This protein is essential for plasmid replication; it is involved in copy control functions. The sequence is that of Probable replication-associated protein repA1 (repA1) from Buchnera aphidicola subsp. Acyrthosiphon pisum (strain APS) (Acyrthosiphon pisum symbiotic bacterium).